We begin with the raw amino-acid sequence, 456 residues long: Probable polygalacturonase At3g15720 (456 aa).

An N-terminal signal peptide occupies residues 1–23; sequence MKKKTWFLNFSLFFLQIFTSSNA. PbH1 repeat units follow at residues 169–195, 196–217, 219–239, 249–270, 278–299, and 314–341; these read CNYV…DVGA, SSNV…AINS, TSNI…SIGS, VENV…RIKT, ARMI…IIDQ, and SSAV…DFRC. The active-site Proton donor is the D210. Residue H233 is part of the active site.

Belongs to the glycosyl hydrolase 28 family.

The protein resides in the secreted. Its subcellular location is the cell wall. It catalyses the reaction (1,4-alpha-D-galacturonosyl)n+m + H2O = (1,4-alpha-D-galacturonosyl)n + (1,4-alpha-D-galacturonosyl)m.. The sequence is that of Probable polygalacturonase At3g15720 from Arabidopsis thaliana (Mouse-ear cress).